Consider the following 149-residue polypeptide: Large ribosomal subunit protein bL9 (149 aa).

It belongs to the bacterial ribosomal protein bL9 family.

Binds to the 23S rRNA. This Aliivibrio salmonicida (strain LFI1238) (Vibrio salmonicida (strain LFI1238)) protein is Large ribosomal subunit protein bL9.